Consider the following 137-residue polypeptide: MLQPKRTKFRKMFKGRIHGLAKGGSDLNFGTYGLKALEPERVTARQIEAARRAMTRHMKRQGRVWIRIFPDTPVTSKPTEVRMGKGKGSVDYWACKVKPGRVMFEIDGVNDEIAREALRLAAMKLPIKTRVVVREDW.

Belongs to the universal ribosomal protein uL16 family. In terms of assembly, part of the 50S ribosomal subunit.

Binds 23S rRNA and is also seen to make contacts with the A and possibly P site tRNAs. This Ruegeria pomeroyi (strain ATCC 700808 / DSM 15171 / DSS-3) (Silicibacter pomeroyi) protein is Large ribosomal subunit protein uL16.